The sequence spans 97 residues: YcgL domain-containing protein PputW619_3899 (97 aa).

One can recognise a YcgL domain in the interval 3-87; that stretch reads RICSIYKSPR…AEDEYIEHLP (85 aa).

The chain is YcgL domain-containing protein PputW619_3899 from Pseudomonas putida (strain W619).